Reading from the N-terminus, the 309-residue chain is Porphobilinogen deaminase (309 aa).

Cys-244 is modified (S-(dipyrrolylmethanemethyl)cysteine).

Belongs to the HMBS family. As to quaternary structure, monomer. The cofactor is dipyrromethane.

It carries out the reaction 4 porphobilinogen + H2O = hydroxymethylbilane + 4 NH4(+). It participates in porphyrin-containing compound metabolism; protoporphyrin-IX biosynthesis; coproporphyrinogen-III from 5-aminolevulinate: step 2/4. Functionally, tetrapolymerization of the monopyrrole PBG into the hydroxymethylbilane pre-uroporphyrinogen in several discrete steps. The protein is Porphobilinogen deaminase of Rhizobium meliloti (strain 1021) (Ensifer meliloti).